Reading from the N-terminus, the 493-residue chain is Matrilin-1 (493 aa).

An N-terminal signal peptide occupies residues 1–23; the sequence is MDGIFCALPLSLLLLLQSCGVWG. The 197-residue stretch at 24–220 folds into the VWFA 1 domain; sequence APPQPRGTLC…THKFQEAFCV (197 aa). N74 carries an N-linked (GlcNAc...) asparagine glycan. The region spanning 221-261 is the EGF-like domain; that stretch reads VSDLCATGDHDCEQICISTPGSYKCACKEGFTLNNDGKTCS. Intrachain disulfides connect C225–C236, C232–C245, and C247–C260. The 189-residue stretch at 262-450 folds into the VWFA 2 domain; that stretch reads ACSGGSGSAL…GKKLQMKICV (189 aa). Positions 462–492 form a coiled coil; that stretch reads KFQTKVEELINTLQQKLEAVAKRIEALENKI.

As to quaternary structure, homotrimer. As to expression, expressed in xyphoid cartilage and chondrocytes (at protein level).

It is found in the secreted. Its subcellular location is the extracellular space. The protein resides in the extracellular matrix. In terms of biological role, a major component of the extracellular matrix of non-articular cartilage. Binds to type 2 collagens and forms long concatenated protein networks as part of the extracellular matrix. Required for the network-like organization and bundling of collagen fibrils surrounding chondrocytes in the zones of maturation and hypertrophy. Required for mechanotransduction and adaption to mechanical loading in cartilage chondrocytes, resulting in an increase in expression of the extracellular matrix components ACAN and COL2A1. Acts as a moderator of angiogenesis in response to injury. In Gallus gallus (Chicken), this protein is Matrilin-1.